A 231-amino-acid polypeptide reads, in one-letter code: 2,3,4,5-tetrahydropyridine-2,6-dicarboxylate N-acetyltransferase (231 aa).

The protein belongs to the transferase hexapeptide repeat family. DapH subfamily.

The enzyme catalyses (S)-2,3,4,5-tetrahydrodipicolinate + acetyl-CoA + H2O = L-2-acetamido-6-oxoheptanedioate + CoA. Its pathway is amino-acid biosynthesis; L-lysine biosynthesis via DAP pathway; LL-2,6-diaminopimelate from (S)-tetrahydrodipicolinate (acetylase route): step 1/3. Catalyzes the transfer of an acetyl group from acetyl-CoA to tetrahydrodipicolinate. The polypeptide is 2,3,4,5-tetrahydropyridine-2,6-dicarboxylate N-acetyltransferase (Thermosipho melanesiensis (strain DSM 12029 / CIP 104789 / BI429)).